Consider the following 185-residue polypeptide: MSNEVLTQTKERMEKAVAAYSRELASVRAGRANPSLLDKVTVEYYGAQTPLNQLSSINVPEARMLVVTPYDKTAIGDIEKAILKADLGVTPTSDGTIIRIAIPALTEERRKELVKVVKKYAEEAKVAVRNVRRDSNDDLKKLEKNGDITEDELRASSEDVQKLTDEYVSKIDSVTKDKEKEIMEV.

Positions 136–155 (NDDLKKLEKNGDITEDELRA) are disordered.

This sequence belongs to the RRF family.

It is found in the cytoplasm. Responsible for the release of ribosomes from messenger RNA at the termination of protein biosynthesis. May increase the efficiency of translation by recycling ribosomes from one round of translation to another. The polypeptide is Ribosome-recycling factor (Bacillus velezensis (strain DSM 23117 / BGSC 10A6 / LMG 26770 / FZB42) (Bacillus amyloliquefaciens subsp. plantarum)).